Here is a 237-residue protein sequence, read N- to C-terminus: Mitochondrial carrier-like protein L276 (237 aa).

Solcar repeat units lie at residues 1-83, 85-161, and 164-233; these read MAKY…FENK, YPYT…LNEY, and KPVV…LNKK. 5 helical membrane-spanning segments follow: residues 11–27, 60–76, 91–108, 140–160, and 166–183; these read AIAT…ICTF, VPAI…KYFL, MING…THPI, SFGK…TLNE, and VVSS…MQPL. A Substrate recognition motif is present at residues 191 to 196; sequence IYGLSL. The helical transmembrane segment at 205–226 threads the bilayer; the sequence is YYRGLSLNLMRIVPHFVITMTT.

This sequence belongs to the mitochondrial carrier (TC 2.A.29) family.

The protein localises to the host mitochondrion inner membrane. Its function is as follows. Transports dATP and to a lesser extent dTTP, TTP, UTP and ADP, possibly across the mitochondrial inner membrane. The sequence is that of Mitochondrial carrier-like protein L276 from Acanthamoeba polyphaga (Amoeba).